The chain runs to 457 residues: Bifunctional protein GlmU (457 aa).

A pyrophosphorylase region spans residues 1–230 (MLNVVILAAG…SWETLGVNSR (230 aa)). Residues 7–10 (LAAG), Lys-21, Gln-73, 78–79 (GT), 104–106 (YGD), Gly-140, Glu-155, Asn-170, and Asn-228 contribute to the UDP-N-acetyl-alpha-D-glucosamine site. Asp-106 is a binding site for Mg(2+). Position 228 (Asn-228) interacts with Mg(2+). Residues 231 to 251 (VQQAQLERAWQSELARRQLEA) are linker. Residues 252-457 (GVTLADPARF…EGWKRPVKKS (206 aa)) form an N-acetyltransferase region. Residues Arg-334 and Lys-352 each contribute to the UDP-N-acetyl-alpha-D-glucosamine site. His-364 (proton acceptor) is an active-site residue. UDP-N-acetyl-alpha-D-glucosamine contacts are provided by Tyr-367 and Asn-378. Residues Ala-381, 387-388 (NY), Ser-406, Ala-424, and Arg-441 contribute to the acetyl-CoA site.

It in the N-terminal section; belongs to the N-acetylglucosamine-1-phosphate uridyltransferase family. In the C-terminal section; belongs to the transferase hexapeptide repeat family. As to quaternary structure, homotrimer. It depends on Mg(2+) as a cofactor.

It is found in the cytoplasm. It catalyses the reaction alpha-D-glucosamine 1-phosphate + acetyl-CoA = N-acetyl-alpha-D-glucosamine 1-phosphate + CoA + H(+). The catalysed reaction is N-acetyl-alpha-D-glucosamine 1-phosphate + UTP + H(+) = UDP-N-acetyl-alpha-D-glucosamine + diphosphate. It functions in the pathway nucleotide-sugar biosynthesis; UDP-N-acetyl-alpha-D-glucosamine biosynthesis; N-acetyl-alpha-D-glucosamine 1-phosphate from alpha-D-glucosamine 6-phosphate (route II): step 2/2. It participates in nucleotide-sugar biosynthesis; UDP-N-acetyl-alpha-D-glucosamine biosynthesis; UDP-N-acetyl-alpha-D-glucosamine from N-acetyl-alpha-D-glucosamine 1-phosphate: step 1/1. Its pathway is bacterial outer membrane biogenesis; LPS lipid A biosynthesis. Its function is as follows. Catalyzes the last two sequential reactions in the de novo biosynthetic pathway for UDP-N-acetylglucosamine (UDP-GlcNAc). The C-terminal domain catalyzes the transfer of acetyl group from acetyl coenzyme A to glucosamine-1-phosphate (GlcN-1-P) to produce N-acetylglucosamine-1-phosphate (GlcNAc-1-P), which is converted into UDP-GlcNAc by the transfer of uridine 5-monophosphate (from uridine 5-triphosphate), a reaction catalyzed by the N-terminal domain. In Bordetella bronchiseptica (strain ATCC BAA-588 / NCTC 13252 / RB50) (Alcaligenes bronchisepticus), this protein is Bifunctional protein GlmU.